A 317-amino-acid polypeptide reads, in one-letter code: Melanocyte-stimulating hormone receptor (317 aa).

The Extracellular segment spans residues 1 to 37 (MPVQGSQRRLLGSLNSTPTATPHLGLAANQTGARCLE). Asparagine 29 carries N-linked (GlcNAc...) asparagine glycosylation. The chain crosses the membrane as a helical span at residues 38–63 (VSVPDGLFLSLGLVSLVENVLVVTAI). At 64–72 (AKNRNLHSP) the chain is on the cytoplasmic side. Residues 73–93 (MYCFICCLALSDLLVSGSNML) traverse the membrane as a helical segment. Over 94-118 (ETAVTLLLEAGVLAARAAVVQQLDN) the chain is Extracellular. A helical membrane pass occupies residues 119–140 (VIDVITCSSMLSSLCFLGAIAV). The Cytoplasmic portion of the chain corresponds to 141–163 (DRYISIFYALRYHSIVTLPRARR). Residues 164 to 183 (AVAAIWVASVLFSTLFIAYY) form a helical membrane-spanning segment. The Extracellular segment spans residues 184–191 (DHAAVLLC). The helical transmembrane segment at 192–211 (LVIFFLAMLVLMAVLYVHML) threads the bilayer. Residues 212–240 (ARACQHAQGIARLHKRQRLAHQGFGLKGA) lie on the Cytoplasmic side of the membrane. The helical transmembrane segment at 241–266 (ATLTILLGIFFLCWGPFFLHLTLIVL) threads the bilayer. Residues 267–279 (CPQHPTCSCIFKN) lie on the Extracellular side of the membrane. A helical membrane pass occupies residues 280–300 (FNLFLALIICNAIIDPLIYAF). Topologically, residues 301-317 (RSQELRRTLKEVLLCSW) are cytoplasmic. Cysteine 315 carries S-palmitoyl cysteine lipidation.

It belongs to the G-protein coupled receptor 1 family. In terms of assembly, interacts with MGRN1, but does not undergo MGRN1-mediated ubiquitination; this interaction competes with GNAS-binding and thus inhibits agonist-induced cAMP production. Interacts with OPN3; the interaction results in a decrease in MC1R-mediated cAMP signaling and ultimately a decrease in melanin production in melanocytes.

The protein resides in the cell membrane. Its function is as follows. Receptor for MSH (alpha, beta and gamma) and ACTH. The activity of this receptor is mediated by G proteins which activate adenylate cyclase. Mediates melanogenesis, the production of eumelanin (black/brown) and phaeomelanin (red/yellow), via regulation of cAMP signaling in melanocytes. This chain is Melanocyte-stimulating hormone receptor (MC1R), found in Papio anubis (Olive baboon).